The chain runs to 350 residues: Protein RecA (350 aa).

Residue 67 to 74 (GPESSGKT) coordinates ATP.

It belongs to the RecA family.

Its subcellular location is the cytoplasm. Can catalyze the hydrolysis of ATP in the presence of single-stranded DNA, the ATP-dependent uptake of single-stranded DNA by duplex DNA, and the ATP-dependent hybridization of homologous single-stranded DNAs. It interacts with LexA causing its activation and leading to its autocatalytic cleavage. The sequence is that of Protein RecA from Chlamydia felis (strain Fe/C-56) (Chlamydophila felis).